The chain runs to 325 residues: TNFAIP3-interacting protein 3 (325 aa).

Disordered stretches follow at residues 1 to 30 and 84 to 129; these read MAHF…STRK and RFLS…RLNE. The segment covering 17–28 has biased composition (basic and acidic residues); the sequence is STEHKECAEPST. A coiled-coil region spans residues 27–265; it reads STRKNLMNSL…LEKQLKQMYC (239 aa). Positions 190–248 are ubiquitin-binding domain (UBD); the sequence is HEEMRTEMEVLKQQVQIYEEDFKKERSDRERLNQEKEELQQINETSQSQLNRLNSQIKA.

As to quaternary structure, interacts with TNFAIP3. Interacts with polyubiquitin. Highly expressed in lung, lymph node, thymus and fetal liver. Expressed at lower levels in bone marrow, brain, kidney, spleen, leukocytes and tonsils. Could be detected in heart, salivary gland, adrenal gland, pancreas, ovary and fetal brain. High levels detected in liver, colon, small intestine, muscle, stomach, testis, placenta, thyroid, uterus, prostate, skin and PBL.

Functionally, binds to zinc finger protein TNFAIP3 and inhibits NF-kappa-B activation induced by tumor necrosis factor, Toll-like receptor 4 (TLR4), interleukin-1 and 12-O-tetradecanoylphorbol-13-acetate. Overexpression inhibits NF-kappa-B-dependent gene expression in response to lipopolysaccharide at a level downstream of TRAF6 and upstream of IKBKB. NF-kappa-B inhibition is independent of TNFAIP3 binding. This Homo sapiens (Human) protein is TNFAIP3-interacting protein 3.